Consider the following 998-residue polypeptide: MKYATGTDNAMTSGISGQTNSSNSASNEMQPTTSTPTAVHKEATSTATTTATYANGNPNPSANPSQSQPSNALFCEQVTTVTNLFEKWNDCERTVVMYALLKRLRYPSLKFLQYSIDSNLTQNLGTSQTNLSSVVIDINANNPVYLQNLLNAYKTFQPCDLLDAMSSSSSDKDSMPCYGSDFQITTSAQCDERKLYARKEDILHEVLNMLPLLKPGNEEAKLIYLTLIPVAVKDTMQQIVPTELVQQIFSYLLIHPAITSEDRRSLNIWLRHLEDHIQAAAAGLTNRSYFLQPSPQLVAGGSSTGSGSCSSSATSSSTASCSSVASSSLCPASGSRSSRTNDWQTIAPPSKQLQNKLAGDWRGSGGGSSSGSINPLCDNLNGITLNELASSQNSLGLSLEGSSSLVNGVVAGAGSMLGIGGGDDHDTSFSKNGTEILDFDPVTANMGEACSLASSSLCGRNGGNPVEDRSQPPPNLQQQLLQPPPYASILMGNVGDQFGEINRWSLDSKIAALKTRRSNSLTTQTISSCSSSSNSSVITVNDNCSNSTENLAQFANKPRSFSLSIEHQRGALMNSGSDTRLDEFKPNYIKFHTRNVGMSGIGLWLKSLRLHKYIELFKNMTYEEMLLITEDFLQSVGVTKGASHKLALCIDKLKERGNILNRVEQELLTGQMELSTAVEELTNIVLTPMKPLESPGPPEENIGLRFLKVIDIVTNTLQQDPYAVQDDETLGVLMWILDRSIHNEAFMNHASQLKDLKFKLSKMKISMVPKMHHVKPAGVGPNNGNINKPRWNGKTRKCDSKSGSNDRINNRKNSNDMLNFSLNCLPHPLPHHSQQAPPPLPQFDYNGYGGGPSHQPQYKSSSYPSFMGNPQQQPPPPPSSKSHHHPQQMQQMLQQHNHFPALPQQTPPQSHRRSLNNLILVAGGPQQPQQLIFKPGQGVLTNNGSNDNLGLERNQQPQQQQQRKLSGGVSSAEQQPKKTMAAVVMENLAKFDQHFTLF.

Residues 1-37 are compositionally biased toward polar residues; sequence MKYATGTDNAMTSGISGQTNSSNSASNEMQPTTSTPT. 3 disordered regions span residues 1-45, 50-69, and 329-370; these read MKYA…EATS, TATY…QSQP, and LCPA…GSSS. Low complexity predominate over residues 329-338; sequence LCPASGSRSS. 2 positions are modified to phosphoserine: Ser564 and Ser575. The interval 583-763 is interaction with cup; it reads EFKPNYIKFH…KDLKFKLSKM (181 aa). Positions 600–654 constitute an SAM domain; sequence GIGLWLKSLRLHKYIELFKNMTYEEMLLITEDFLQSVGVTKGASHKLALCIDKLK. 2 disordered regions span residues 773–892 and 943–977; these read HVKP…MQQM and NGSN…QQPK. Composition is skewed to polar residues over residues 801–822 and 854–864; these read KSGS…NFSL and HQPQYKSSSYP. Ser971 carries the phosphoserine modification.

It belongs to the SMAUG family. Interacts with oskar (osk). Binds to the 3'-UTR of nos. Interacts with cup, which in turn recruits eIF4-E, leading to an indirect interaction between smg and eIF4-E that prevents mRNA translation.

The protein localises to the cytoplasm. Translation regulator that binds to the 3'-UTR of specific mRNAs such as nanos (nos) and prevent their translation. Prevents translation of unlocalized nos in the bulk cytoplasm via the recruitment of cup. In Drosophila sechellia (Fruit fly), this protein is Protein Smaug.